The primary structure comprises 342 residues: N-acetyl-gamma-glutamyl-phosphate reductase (342 aa).

Residue Cys147 is part of the active site.

Belongs to the NAGSA dehydrogenase family. Type 1 subfamily.

It is found in the cytoplasm. It catalyses the reaction N-acetyl-L-glutamate 5-semialdehyde + phosphate + NADP(+) = N-acetyl-L-glutamyl 5-phosphate + NADPH + H(+). Its pathway is amino-acid biosynthesis; L-arginine biosynthesis; N(2)-acetyl-L-ornithine from L-glutamate: step 3/4. Catalyzes the NADPH-dependent reduction of N-acetyl-5-glutamyl phosphate to yield N-acetyl-L-glutamate 5-semialdehyde. In Methanosphaera stadtmanae (strain ATCC 43021 / DSM 3091 / JCM 11832 / MCB-3), this protein is N-acetyl-gamma-glutamyl-phosphate reductase.